A 620-amino-acid chain; its full sequence is Chaperone protein HscA homolog (620 aa).

Belongs to the heat shock protein 70 family.

Its function is as follows. Chaperone involved in the maturation of iron-sulfur cluster-containing proteins. Has a low intrinsic ATPase activity which is markedly stimulated by HscB. The polypeptide is Chaperone protein HscA homolog (Pseudomonas entomophila (strain L48)).